Here is a 482-residue protein sequence, read N- to C-terminus: Probable glycine dehydrogenase (decarboxylating) subunit 2 (482 aa).

K269 carries the post-translational modification N6-(pyridoxal phosphate)lysine.

It belongs to the GcvP family. C-terminal subunit subfamily. The glycine cleavage system is composed of four proteins: P, T, L and H. In this organism, the P 'protein' is a heterodimer of two subunits. Pyridoxal 5'-phosphate is required as a cofactor.

The catalysed reaction is N(6)-[(R)-lipoyl]-L-lysyl-[glycine-cleavage complex H protein] + glycine + H(+) = N(6)-[(R)-S(8)-aminomethyldihydrolipoyl]-L-lysyl-[glycine-cleavage complex H protein] + CO2. Its function is as follows. The glycine cleavage system catalyzes the degradation of glycine. The P protein binds the alpha-amino group of glycine through its pyridoxal phosphate cofactor; CO(2) is released and the remaining methylamine moiety is then transferred to the lipoamide cofactor of the H protein. This is Probable glycine dehydrogenase (decarboxylating) subunit 2 from Pelodictyon phaeoclathratiforme (strain DSM 5477 / BU-1).